The chain runs to 480 residues: UDP-N-acetylmuramate--L-alanine ligase (480 aa).

An ATP-binding site is contributed by 125–131 (GTHGKTT).

This sequence belongs to the MurCDEF family.

The protein localises to the cytoplasm. The catalysed reaction is UDP-N-acetyl-alpha-D-muramate + L-alanine + ATP = UDP-N-acetyl-alpha-D-muramoyl-L-alanine + ADP + phosphate + H(+). The protein operates within cell wall biogenesis; peptidoglycan biosynthesis. Functionally, cell wall formation. The protein is UDP-N-acetylmuramate--L-alanine ligase of Ectopseudomonas mendocina (strain ymp) (Pseudomonas mendocina).